The following is a 212-amino-acid chain: Putative DNA-binding protein At1g48610 (212 aa).

Positions 1–130 (MAKTALTPPA…GRPKKDDVAA (130 aa)) are disordered. Residues 27–44 (NKPQTDATGVSATDTASQ) are compositionally biased toward polar residues. DNA-binding regions (a.T hook) lie at residues 45–56 (KRGRGRPPKAKS), 70–79 (TKPSGRPKRN), and 94–98 (KKRGR). Over residues 57–72 (DSSQIGAVSAKASTKP) the composition is skewed to polar residues. Over residues 103 to 113 (TVTAAVVTTAT) the composition is skewed to low complexity. The segment at residues 118–127 (RKRGRPKKDD) is a DNA-binding region (a.T hook 4). The stretch at 176-210 (DLKKRTALLQKKVKEAAAKLKQAVTAIDEVQKLAD) forms a coiled coil.

Its subcellular location is the nucleus. In terms of biological role, may bind DNA. This is Putative DNA-binding protein At1g48610 from Arabidopsis thaliana (Mouse-ear cress).